The sequence spans 228 residues: Phosphoribosylformylglycinamidine synthase subunit PurQ (228 aa).

Positions 4 to 226 (AVVVFPGSNC…VNYWRETHVV (223 aa)) constitute a Glutamine amidotransferase type-1 domain. The active-site Nucleophile is the cysteine 86. Active-site residues include histidine 195 and glutamate 197.

As to quaternary structure, part of the FGAM synthase complex composed of 1 PurL, 1 PurQ and 2 PurS subunits.

The protein resides in the cytoplasm. The catalysed reaction is N(2)-formyl-N(1)-(5-phospho-beta-D-ribosyl)glycinamide + L-glutamine + ATP + H2O = 2-formamido-N(1)-(5-O-phospho-beta-D-ribosyl)acetamidine + L-glutamate + ADP + phosphate + H(+). It carries out the reaction L-glutamine + H2O = L-glutamate + NH4(+). It participates in purine metabolism; IMP biosynthesis via de novo pathway; 5-amino-1-(5-phospho-D-ribosyl)imidazole from N(2)-formyl-N(1)-(5-phospho-D-ribosyl)glycinamide: step 1/2. In terms of biological role, part of the phosphoribosylformylglycinamidine synthase complex involved in the purines biosynthetic pathway. Catalyzes the ATP-dependent conversion of formylglycinamide ribonucleotide (FGAR) and glutamine to yield formylglycinamidine ribonucleotide (FGAM) and glutamate. The FGAM synthase complex is composed of three subunits. PurQ produces an ammonia molecule by converting glutamine to glutamate. PurL transfers the ammonia molecule to FGAR to form FGAM in an ATP-dependent manner. PurS interacts with PurQ and PurL and is thought to assist in the transfer of the ammonia molecule from PurQ to PurL. The polypeptide is Phosphoribosylformylglycinamidine synthase subunit PurQ (Geobacillus kaustophilus (strain HTA426)).